A 201-amino-acid polypeptide reads, in one-letter code: CDP-diacylglycerol--serine O-phosphatidyltransferase (201 aa).

A run of 6 helical transmembrane segments spans residues I19–I39, F57–L77, L88–L108, G112–I132, N133–I153, and I162–A182.

The protein belongs to the CDP-alcohol phosphatidyltransferase class-I family.

Its subcellular location is the cell membrane. It catalyses the reaction a CDP-1,2-diacyl-sn-glycerol + L-serine = a 1,2-diacyl-sn-glycero-3-phospho-L-serine + CMP + H(+). This is CDP-diacylglycerol--serine O-phosphatidyltransferase (pssA) from Methanocaldococcus jannaschii (strain ATCC 43067 / DSM 2661 / JAL-1 / JCM 10045 / NBRC 100440) (Methanococcus jannaschii).